Here is a 629-residue protein sequence, read N- to C-terminus: 1-deoxy-D-xylulose-5-phosphate synthase (629 aa).

Thiamine diphosphate-binding positions include H72 and 113–115; that span reads GHA. Residue D144 coordinates Mg(2+). Residues 145–146, N174, Y287, and E370 each bind thiamine diphosphate; that span reads GA. N174 lines the Mg(2+) pocket.

The protein belongs to the transketolase family. DXPS subfamily. In terms of assembly, homodimer. The cofactor is Mg(2+). Thiamine diphosphate is required as a cofactor.

It carries out the reaction D-glyceraldehyde 3-phosphate + pyruvate + H(+) = 1-deoxy-D-xylulose 5-phosphate + CO2. It participates in metabolic intermediate biosynthesis; 1-deoxy-D-xylulose 5-phosphate biosynthesis; 1-deoxy-D-xylulose 5-phosphate from D-glyceraldehyde 3-phosphate and pyruvate: step 1/1. Catalyzes the acyloin condensation reaction between C atoms 2 and 3 of pyruvate and glyceraldehyde 3-phosphate to yield 1-deoxy-D-xylulose-5-phosphate (DXP). This Prochlorococcus marinus (strain AS9601) protein is 1-deoxy-D-xylulose-5-phosphate synthase.